A 249-amino-acid polypeptide reads, in one-letter code: Transmembrane protein 51 (249 aa).

Transmembrane regions (helical) follow at residues 17-37 and 64-84; these read IGLGMLVLGVIMAMWNLVPGF and VAYVLVGAGMMLLLLAICLSI. Disordered regions lie at residues 95-126, 161-199, and 213-249; these read ELARIQQQAGTVPHSQEEDSQEEEEDVSSRYY, TGLDEATPTSTRAETETSPGHAPDRQNSKLAKRLKPLKV, and RITLPDKNVPPPSIEPLTPPPLYDEVQAKAPDARPPD. Polar residues predominate over residues 99 to 108; it reads IQQQAGTVPH. Phosphoserine occurs at positions 109, 114, 178, and 188. A compositionally biased stretch (polar residues) spans 167 to 178; that stretch reads TPTSTRAETETS. Positions 190-199 are enriched in basic residues; sequence LAKRLKPLKV. Residues 220-234 show a composition bias toward pro residues; it reads NVPPPSIEPLTPPPL.

The protein localises to the membrane. The polypeptide is Transmembrane protein 51 (Tmem51) (Mus musculus (Mouse)).